A 66-amino-acid polypeptide reads, in one-letter code: U1-theraphotoxin-Cg1d 2 (66 aa).

The N-terminal stretch at 1–21 (MKMSALFPIFGLPLLFCNSFA) is a signal peptide. Positions 22–29 (AELKATGR) are excised as a propeptide. 3 disulfide bridges follow: Cys-31/Cys-46, Cys-38/Cys-51, and Cys-45/Cys-58. Pro-63 carries the proline amide modification.

This sequence belongs to the neurotoxin 10 (Hwtx-1) family. 46 (Jztx-7/10/12) subfamily. In terms of tissue distribution, expressed by the venom gland.

The protein resides in the secreted. In terms of biological role, probable ion channel inhibitor. The sequence is that of U1-theraphotoxin-Cg1d 2 from Chilobrachys guangxiensis (Chinese earth tiger tarantula).